The following is a 123-amino-acid chain: Phosphoribosyl-AMP cyclohydrolase (123 aa).

Asp-76 provides a ligand contact to Mg(2+). Cys-77 lines the Zn(2+) pocket. Mg(2+) contacts are provided by Asp-78 and Asp-80. Residues Cys-93 and Cys-100 each coordinate Zn(2+).

Belongs to the PRA-CH family. As to quaternary structure, homodimer. Requires Mg(2+) as cofactor. It depends on Zn(2+) as a cofactor.

The protein resides in the cytoplasm. The catalysed reaction is 1-(5-phospho-beta-D-ribosyl)-5'-AMP + H2O = 1-(5-phospho-beta-D-ribosyl)-5-[(5-phospho-beta-D-ribosylamino)methylideneamino]imidazole-4-carboxamide. It functions in the pathway amino-acid biosynthesis; L-histidine biosynthesis; L-histidine from 5-phospho-alpha-D-ribose 1-diphosphate: step 3/9. Catalyzes the hydrolysis of the adenine ring of phosphoribosyl-AMP. The polypeptide is Phosphoribosyl-AMP cyclohydrolase (Methanocorpusculum labreanum (strain ATCC 43576 / DSM 4855 / Z)).